Reading from the N-terminus, the 165-residue chain is MGLGDYSHCRQRMSRGLYGVSGRATLWSPAFHPVHRMPCGTWRIEAPEHVRASSPVLEHLRRQLERAFQRAAARGRARRAREAVAAVAAAAAAAREERSRARMECALARLRAELLELRFQNHQLARTLLDLNMKMQQLKKRQDQERASKPQSPQDEEMNPECGNA.

The tract at residues Gln-136–Ala-165 is disordered.

This Rattus norvegicus (Rat) protein is Alanine- and arginine-rich domain-containing protein (Aard).